A 150-amino-acid polypeptide reads, in one-letter code: FAD synthase (150 aa).

Residues 10 to 11, 15 to 18, aspartate 97, and tyrosine 124 each bind ATP; these read VF and HPGH.

It belongs to the archaeal FAD synthase family. As to quaternary structure, homodimer. It depends on a divalent metal cation as a cofactor.

It carries out the reaction FMN + ATP + H(+) = FAD + diphosphate. It functions in the pathway cofactor biosynthesis; FAD biosynthesis; FAD from FMN: step 1/1. Its function is as follows. Catalyzes the transfer of the AMP portion of ATP to flavin mononucleotide (FMN) to produce flavin adenine dinucleotide (FAD) coenzyme. This Methanopyrus kandleri (strain AV19 / DSM 6324 / JCM 9639 / NBRC 100938) protein is FAD synthase.